We begin with the raw amino-acid sequence, 529 residues long: Sodium/hydrogen exchanger 4 (529 aa).

Over Met-1–Gln-19 the chain is Cytoplasmic. A helical transmembrane segment spans residues Val-20–Leu-40. The Vacuolar segment spans residues Glu-41–Trp-45. Residues Val-46–Ile-66 form a helical membrane-spanning segment. Residues Ser-67–His-73 lie on the Cytoplasmic side of the membrane. Residues Ile-74–Ala-94 constitute an intramembrane region (helical). Topologically, residues Gly-95 to Ser-112 are cytoplasmic. Residues Phe-113–Phe-133 traverse the membrane as a helical segment. Residues Pro-134 to Pro-171 lie on the Vacuolar side of the membrane. Residues Leu-172–Phe-192 traverse the membrane as a helical segment. Topologically, residues Asn-193–Asn-214 are cytoplasmic. Residues Phe-215–Phe-235 form a helical membrane-spanning segment. Topologically, residues Val-236–Glu-250 are vacuolar. Residues Leu-251–Leu-267 traverse the membrane as a helical segment. The Cytoplasmic portion of the chain corresponds to Phe-268–Ile-273. Residues Leu-274 to Val-291 form a helical membrane-spanning segment. Topologically, residues Thr-292–His-301 are vacuolar. Residues Val-302–Ala-322 traverse the membrane as a helical segment. Residues Leu-323 to Ser-342 are Cytoplasmic-facing. The helical transmembrane segment at Gly-343–Leu-363 threads the bilayer. Topologically, residues Thr-364–Lys-380 are vacuolar. Asn-374 carries N-linked (GlcNAc...) asparagine glycosylation. A helical transmembrane segment spans residues His-381 to Phe-401. The Cytoplasmic portion of the chain corresponds to Lys-402–Asn-415. A helical membrane pass occupies residues Ala-416–Leu-436. Topologically, residues Thr-437–Cys-529 are vacuolar.

Belongs to the monovalent cation:proton antiporter 1 (CPA1) transporter (TC 2.A.36) family. Expressed at very low levels in roots and shoots.

The protein localises to the vacuole membrane. The enzyme catalyses Na(+)(in) + H(+)(out) = Na(+)(out) + H(+)(in). The catalysed reaction is K(+)(in) + H(+)(out) = K(+)(out) + H(+)(in). Its function is as follows. May act in low affinity electroneutral exchange of protons for cations such as Na(+) or K(+) across membranes. May also exchange Li(+) and Cs(+) with a lower affinity. This Arabidopsis thaliana (Mouse-ear cress) protein is Sodium/hydrogen exchanger 4 (NHX4).